The sequence spans 162 residues: Phosphopantetheine adenylyltransferase (162 aa).

T9 provides a ligand contact to substrate. Residues T9–F10 and H17 contribute to the ATP site. K41, L76, and R90 together coordinate substrate. Residues G91–R93, E101, and H126–R132 contribute to the ATP site.

The protein belongs to the bacterial CoaD family. As to quaternary structure, homohexamer. It depends on Mg(2+) as a cofactor.

It is found in the cytoplasm. It catalyses the reaction (R)-4'-phosphopantetheine + ATP + H(+) = 3'-dephospho-CoA + diphosphate. It functions in the pathway cofactor biosynthesis; coenzyme A biosynthesis; CoA from (R)-pantothenate: step 4/5. In terms of biological role, reversibly transfers an adenylyl group from ATP to 4'-phosphopantetheine, yielding dephospho-CoA (dPCoA) and pyrophosphate. This is Phosphopantetheine adenylyltransferase from Caulobacter sp. (strain K31).